The chain runs to 398 residues: Elongation factor Tu (398 aa).

Residues 10-207 (KPHVNIGTIG…TVDSYIPEPE (198 aa)) enclose the tr-type G domain. Residues 19-26 (GHVDHGKT) are G1. A GTP-binding site is contributed by 19 to 26 (GHVDHGKT). Thr-26 is a Mg(2+) binding site. Residues 63 to 67 (GITIN) are G2. Positions 84-87 (DAPG) are G3. Residues 84 to 88 (DAPGH) and 139 to 142 (NKVD) contribute to the GTP site. The interval 139 to 142 (NKVD) is G4. A G5 region spans residues 177–179 (SAL).

The protein belongs to the TRAFAC class translation factor GTPase superfamily. Classic translation factor GTPase family. EF-Tu/EF-1A subfamily. As to quaternary structure, monomer.

It is found in the cytoplasm. It catalyses the reaction GTP + H2O = GDP + phosphate + H(+). GTP hydrolase that promotes the GTP-dependent binding of aminoacyl-tRNA to the A-site of ribosomes during protein biosynthesis. In Streptococcus pyogenes serotype M28 (strain MGAS6180), this protein is Elongation factor Tu.